The chain runs to 206 residues: Probable GTP-binding protein EngB (206 aa).

Positions 29 to 201 (ILPEVAVVGR…MIMIQDALND (173 aa)) constitute an EngB-type G domain. GTP is bound by residues 37 to 44 (GRSNVGKS), 64 to 68 (GKTQA), 82 to 85 (DLPG), 149 to 152 (TKID), and 180 to 182 (YSV). Mg(2+) is bound by residues serine 44 and threonine 66.

It belongs to the TRAFAC class TrmE-Era-EngA-EngB-Septin-like GTPase superfamily. EngB GTPase family. It depends on Mg(2+) as a cofactor.

Its function is as follows. Necessary for normal cell division and for the maintenance of normal septation. The polypeptide is Probable GTP-binding protein EngB (Protochlamydia amoebophila (strain UWE25)).